The sequence spans 210 residues: MDEDGLPIVGSGIDLTKVPAIQQRRVVAYLNQFIVHTVRFLNRFSTVCEEKLASISLRIQQIETTLSILEAKLSSIPGLEDVRVEGVGQLPATEVNGPVTVVVPSQPETPIAVAVPLPPPEASPNIPDPRAAEAAGDGRMTVAKDPRYARYLKMVQVGVPVMAIKNKMVQEGLDPNLLDTPDAPVPDAVKKNTLDQDDDSDDGSESSFSD.

Residues 49–73 (EEKLASISLRIQQIETTLSILEAKL) are a coiled coil. Positions 173-210 (LDPNLLDTPDAPVPDAVKKNTLDQDDDSDDGSESSFSD) are disordered. Positions 195–204 (DQDDDSDDGS) are enriched in acidic residues.

It belongs to the CCDC53 family. As to quaternary structure, component of the WASH complex.

This chain is WASH complex subunit 3, found in Salmo salar (Atlantic salmon).